The chain runs to 380 residues: Cytochrome b (380 aa).

The next 4 helical transmembrane spans lie at 34–54, 78–99, 114–134, and 179–199; these read FGSL…LLAT, WLIR…YLHI, WNTG…GYVL, and FFAL…THLT. Heme b-binding residues include H84 and H98. Heme b is bound by residues H183 and H197. H202 contacts a ubiquinone. 4 consecutive transmembrane segments (helical) span residues 227 to 247, 289 to 309, 321 to 341, and 348 to 368; these read PKDL…ALFS, LGGV…PFLH, LSQL…WVGS, and FIII…ILFP.

Belongs to the cytochrome b family. As to quaternary structure, the cytochrome bc1 complex contains 11 subunits: 3 respiratory subunits (MT-CYB, CYC1 and UQCRFS1), 2 core proteins (UQCRC1 and UQCRC2) and 6 low-molecular weight proteins (UQCRH/QCR6, UQCRB/QCR7, UQCRQ/QCR8, UQCR10/QCR9, UQCR11/QCR10 and a cleavage product of UQCRFS1). This cytochrome bc1 complex then forms a dimer. Heme b is required as a cofactor.

It is found in the mitochondrion inner membrane. Component of the ubiquinol-cytochrome c reductase complex (complex III or cytochrome b-c1 complex) that is part of the mitochondrial respiratory chain. The b-c1 complex mediates electron transfer from ubiquinol to cytochrome c. Contributes to the generation of a proton gradient across the mitochondrial membrane that is then used for ATP synthesis. In Todus todus (Jamaican tody), this protein is Cytochrome b (MT-CYB).